The sequence spans 310 residues: Methionyl-tRNA formyltransferase (310 aa).

Residue 110-113 participates in (6S)-5,6,7,8-tetrahydrofolate binding; it reads SVLP.

Belongs to the Fmt family.

The enzyme catalyses L-methionyl-tRNA(fMet) + (6R)-10-formyltetrahydrofolate = N-formyl-L-methionyl-tRNA(fMet) + (6S)-5,6,7,8-tetrahydrofolate + H(+). In terms of biological role, attaches a formyl group to the free amino group of methionyl-tRNA(fMet). The formyl group appears to play a dual role in the initiator identity of N-formylmethionyl-tRNA by promoting its recognition by IF2 and preventing the misappropriation of this tRNA by the elongation apparatus. The polypeptide is Methionyl-tRNA formyltransferase (Mycolicibacterium vanbaalenii (strain DSM 7251 / JCM 13017 / BCRC 16820 / KCTC 9966 / NRRL B-24157 / PYR-1) (Mycobacterium vanbaalenii)).